A 249-amino-acid polypeptide reads, in one-letter code: Enolase-phosphatase E1 (249 aa).

The protein belongs to the HAD-like hydrolase superfamily. MasA/MtnC family. Monomer. Requires Mg(2+) as cofactor.

It catalyses the reaction 5-methylsulfanyl-2,3-dioxopentyl phosphate + H2O = 1,2-dihydroxy-5-(methylsulfanyl)pent-1-en-3-one + phosphate. It functions in the pathway amino-acid biosynthesis; L-methionine biosynthesis via salvage pathway; L-methionine from S-methyl-5-thio-alpha-D-ribose 1-phosphate: step 3/6. It participates in amino-acid biosynthesis; L-methionine biosynthesis via salvage pathway; L-methionine from S-methyl-5-thio-alpha-D-ribose 1-phosphate: step 4/6. Its function is as follows. Bifunctional enzyme that catalyzes the enolization of 2,3-diketo-5-methylthiopentyl-1-phosphate (DK-MTP-1-P) into the intermediate 2-hydroxy-3-keto-5-methylthiopentenyl-1-phosphate (HK-MTPenyl-1-P), which is then dephosphorylated to form the acireductone 1,2-dihydroxy-3-keto-5-methylthiopentene (DHK-MTPene). In Synechococcus sp. (strain RCC307), this protein is Enolase-phosphatase E1.